We begin with the raw amino-acid sequence, 398 residues long: NADH-ubiquinone oxidoreductase 49 kDa subunit (398 aa).

Belongs to the complex I 49 kDa subunit family.

Its subcellular location is the mitochondrion. The enzyme catalyses a ubiquinone + NADH + 5 H(+)(in) = a ubiquinol + NAD(+) + 4 H(+)(out). Functionally, core subunit of the mitochondrial membrane respiratory chain NADH dehydrogenase (Complex I) that is believed to belong to the minimal assembly required for catalysis. Complex I functions in the transfer of electrons from NADH to the respiratory chain. The immediate electron acceptor for the enzyme is believed to be ubiquinone. Component of the iron-sulfur (IP) fragment of the enzyme. Component of the iron-sulfur (IP) fragment of the enzyme. The protein is NADH-ubiquinone oxidoreductase 49 kDa subunit (NAD7) of Cafeteria roenbergensis (Marine flagellate).